The primary structure comprises 224 residues: MAQKEEAAAATEAASQNGEDLENLDDPEKLKELIELPPFEIVTGERLPANFFKFQFRNVEYSSGRNKTFLCYVVEAQGKGGQVQASRGYLEDEHAAAHAEEAFFNTILPAFDPALRYNVTWYVSSSPCAACADRIIKTLSKTKNLRLLILVGRLFMWEELEIQDALKKLKEAGCKLRIMKPQDFEYVWQNFVEQEEGESKAFQPWEDIQENFLYYEEKLADILK.

The interval 1–25 (MAQKEEAAAATEAASQNGEDLENLD) is disordered. Positions 60 and 98 each coordinate Zn(2+). The CMP/dCMP-type deaminase domain maps to 64 to 169 (GRNKTFLCYV…LEIQDALKKL (106 aa)). Residue glutamate 100 is the Proton donor of the active site. Residues cysteine 128 and cysteine 131 each contribute to the Zn(2+) site.

This sequence belongs to the cytidine and deoxycytidylate deaminase family. As to quaternary structure, homotetramer. Zn(2+) is required as a cofactor.

It catalyses the reaction cytidine(6666) in apoB mRNA + H2O + H(+) = uridine(6666) in apoB mRNA + NH4(+). Functionally, probable C to U editing enzyme whose physiological substrate is not yet known. Does not display detectable apoB mRNA editing. Has a low intrinsic cytidine deaminase activity. May play a role in the epigenetic regulation of gene expression through the process of active DNA demethylation. The sequence is that of Probable C-&gt;U-editing enzyme APOBEC-2 (APOBEC2) from Pongo pygmaeus (Bornean orangutan).